The sequence spans 313 residues: Cytochrome c biogenesis protein CcsA (313 aa).

Helical transmembrane passes span 13 to 35 (ISFS…EIAG), 43 to 63 (GMIA…IYSG), 67 to 87 (LSNL…IHMI), 96 to 116 (FLSS…TSGL), 142 to 162 (MLLS…LLVI), 219 to 239 (VIGI…VWAN), 252 to 269 (ETWA…LHTR), and 280 to 300 (AIVA…VNLL).

The protein belongs to the CcmF/CycK/Ccl1/NrfE/CcsA family. May interact with Ccs1.

It localises to the plastid. The protein resides in the chloroplast thylakoid membrane. Its function is as follows. Required during biogenesis of c-type cytochromes (cytochrome c6 and cytochrome f) at the step of heme attachment. This is Cytochrome c biogenesis protein CcsA from Amborella trichopoda.